A 467-amino-acid chain; its full sequence is Probable apyrase 2 (467 aa).

Residues 1-25 (MRRYSALPGGGARPDTLADRLHRYR) are Cytoplasmic-facing. A helical; Signal-anchor for type II membrane protein transmembrane segment spans residues 26 to 46 (GVLLVILAPLALVSLVLLLMP). At 47–467 (RSPASSSAAA…PLGSAIEVAS (421 aa)) the chain is on the extracellular side. An ATP-binding site is contributed by 70–80 (VIFDAGSSGSR). Glu192 functions as the Proton acceptor in the catalytic mechanism. 216-226 (GVVDLGGGSVQ) provides a ligand contact to ATP.

This sequence belongs to the GDA1/CD39 NTPase family. Requires Ca(2+) as cofactor.

The protein localises to the membrane. It carries out the reaction a ribonucleoside 5'-triphosphate + 2 H2O = a ribonucleoside 5'-phosphate + 2 phosphate + 2 H(+). Functionally, catalyzes the hydrolysis of phosphoanhydride bonds of nucleoside tri- and di-phosphates. This is Probable apyrase 2 (APY2) from Oryza sativa subsp. japonica (Rice).